A 117-amino-acid chain; its full sequence is UPF0231 protein HI_1724 (117 aa).

Belongs to the UPF0231 family.

The sequence is that of UPF0231 protein HI_1724 from Haemophilus influenzae (strain ATCC 51907 / DSM 11121 / KW20 / Rd).